A 468-amino-acid polypeptide reads, in one-letter code: Hydroxymethylglutaryl-CoA synthase B (468 aa).

Glu85 acts as the Proton donor/acceptor in catalysis. Residue Cys119 is the Acyl-thioester intermediate of the active site. Cys119, Thr161, Ser211, His250, Lys259, Asn327, and Ser359 together coordinate (3S)-3-hydroxy-3-methylglutaryl-CoA. Residue His250 is the Proton donor/acceptor of the active site.

Belongs to the thiolase-like superfamily. HMG-CoA synthase family.

The catalysed reaction is acetoacetyl-CoA + acetyl-CoA + H2O = (3S)-3-hydroxy-3-methylglutaryl-CoA + CoA + H(+). It participates in metabolic intermediate biosynthesis; (R)-mevalonate biosynthesis; (R)-mevalonate from acetyl-CoA: step 2/3. Its function is as follows. Condenses acetyl-CoA with acetoacetyl-CoA to form HMG-CoA, which is the substrate for HMG-CoA reductase. The protein is Hydroxymethylglutaryl-CoA synthase B (hgsB) of Dictyostelium discoideum (Social amoeba).